Consider the following 238-residue polypeptide: 1-(5-phosphoribosyl)-5-[(5-phosphoribosylamino)methylideneamino] imidazole-4-carboxamide isomerase (238 aa).

Catalysis depends on Asp8, which acts as the Proton acceptor. Asp129 functions as the Proton donor in the catalytic mechanism.

Belongs to the HisA/HisF family.

The protein localises to the cytoplasm. It carries out the reaction 1-(5-phospho-beta-D-ribosyl)-5-[(5-phospho-beta-D-ribosylamino)methylideneamino]imidazole-4-carboxamide = 5-[(5-phospho-1-deoxy-D-ribulos-1-ylimino)methylamino]-1-(5-phospho-beta-D-ribosyl)imidazole-4-carboxamide. The protein operates within amino-acid biosynthesis; L-histidine biosynthesis; L-histidine from 5-phospho-alpha-D-ribose 1-diphosphate: step 4/9. The chain is 1-(5-phosphoribosyl)-5-[(5-phosphoribosylamino)methylideneamino] imidazole-4-carboxamide isomerase from Anaeromyxobacter sp. (strain Fw109-5).